Here is a 100-residue protein sequence, read N- to C-terminus: Integration host factor subunit alpha (100 aa).

The disordered stretch occupies residues 53 to 72; the sequence is FDLRDKRQRPGRNPKTGEEI.

This sequence belongs to the bacterial histone-like protein family. In terms of assembly, heterodimer of an alpha and a beta chain.

Functionally, this protein is one of the two subunits of integration host factor, a specific DNA-binding protein that functions in genetic recombination as well as in transcriptional and translational control. The sequence is that of Integration host factor subunit alpha from Stutzerimonas stutzeri (strain A1501) (Pseudomonas stutzeri).